The following is a 798-amino-acid chain: Penicillin-binding protein 1A (798 aa).

Over 1–9 the chain is Cytoplasmic; the sequence is MIKKIVTTC. A helical; Signal-anchor for type II membrane protein transmembrane segment spans residues 10–30; that stretch reads FGLVLGLCVFGVGLVAIAILV. Residues 31-798 lie on the Periplasmic side of the membrane; sequence TYPKLPSLDS…SKQPQLDSLF (768 aa). The tract at residues 50–218 is transglycosylase; the sequence is LTIYSADGEV…SAYNPIVNPE (169 aa). Glu88 functions as the Proton donor; for transglycosylase activity in the catalytic mechanism. The segment at 414–700 is transpeptidase; sequence VVVQEPLLQA…GTIAVPVWVD (287 aa). Ser461 serves as the catalytic Acyl-ester intermediate; for transpeptidase activity. Residues 751–798 are disordered; the sequence is SRRIREDKEAGAEDVERGAADEVRQEVQETPVLPSNTGSKQPQLDSLF. The segment covering 753 to 777 has biased composition (basic and acidic residues); that stretch reads RIREDKEAGAEDVERGAADEVRQEV. The segment covering 783 to 798 has biased composition (polar residues); the sequence is LPSNTGSKQPQLDSLF.

This sequence in the N-terminal section; belongs to the glycosyltransferase 51 family. In the C-terminal section; belongs to the transpeptidase family.

The protein resides in the cell inner membrane. It catalyses the reaction [GlcNAc-(1-&gt;4)-Mur2Ac(oyl-L-Ala-gamma-D-Glu-L-Lys-D-Ala-D-Ala)](n)-di-trans,octa-cis-undecaprenyl diphosphate + beta-D-GlcNAc-(1-&gt;4)-Mur2Ac(oyl-L-Ala-gamma-D-Glu-L-Lys-D-Ala-D-Ala)-di-trans,octa-cis-undecaprenyl diphosphate = [GlcNAc-(1-&gt;4)-Mur2Ac(oyl-L-Ala-gamma-D-Glu-L-Lys-D-Ala-D-Ala)](n+1)-di-trans,octa-cis-undecaprenyl diphosphate + di-trans,octa-cis-undecaprenyl diphosphate + H(+). It carries out the reaction Preferential cleavage: (Ac)2-L-Lys-D-Ala-|-D-Ala. Also transpeptidation of peptidyl-alanyl moieties that are N-acyl substituents of D-alanine.. Its pathway is cell wall biogenesis; peptidoglycan biosynthesis. Functionally, cell wall formation. Synthesis of cross-linked peptidoglycan from the lipid intermediates. The enzyme has a penicillin-insensitive transglycosylase N-terminal domain (formation of linear glycan strands) and a penicillin-sensitive transpeptidase C-terminal domain (cross-linking of the peptide subunits). This Neisseria cinerea protein is Penicillin-binding protein 1A (mrcA).